The sequence spans 209 residues: Large ribosomal subunit protein uL3 (209 aa).

The disordered stretch occupies residues 144-165; the sequence is GSMGAASDPSRTFKNKKMPGHM.

Belongs to the universal ribosomal protein uL3 family. In terms of assembly, part of the 50S ribosomal subunit. Forms a cluster with proteins L14 and L19.

In terms of biological role, one of the primary rRNA binding proteins, it binds directly near the 3'-end of the 23S rRNA, where it nucleates assembly of the 50S subunit. This is Large ribosomal subunit protein uL3 from Clostridium novyi (strain NT).